A 503-amino-acid chain; its full sequence is MKEYQVYLERDRSRQQDFLYPLIFREYIYGLAYSHDFNRSSFVENVGYDNKFSLLIVKRLITRMYQQNHLIISANDSNKNPFLGYNXNFYSQIISEGFAIVVEIPFFLQLSSSLEEAEIVKSYQNLRSIHSIFPFLEDKFTYLNYVSDIRIPYPIHLEILVQILRYWVKDAPFFHLLRLFLYNFCNWNSFSTPKSTFSKSNPRLFLFLYNFYVCEYESIFLFLRKKSSHLRLKSFSVFFERIFFYAKREHLVEVFAKDFSSTLTFFNDPLIHYVRYQGKSILASKNGPLVMNKWKHYCIHLWQCFFDIWSQPGTIHINQLSEHSFHLLGYFSNVRLNRSVVRSQMLQNTFLIEIVSKKLDIIVPIIPLIRSLAKAKFCNVLRDPISKPVWGDSSDFDIIERFLRICRNLSHYYNGSSKKKSLYRIKYILRLSCIKTLACKHKTTVRAFLKRSGSEELLEEFFTEEEGILSLIFPRASSTLQRLHRNRIWYLDILFSNDLVNHE.

Belongs to the intron maturase 2 family. MatK subfamily.

It is found in the plastid. Its subcellular location is the chloroplast. Its function is as follows. Usually encoded in the trnK tRNA gene intron. Probably assists in splicing its own and other chloroplast group II introns. The polypeptide is Maturase K (Caragana arborescens (Siberian pea tree)).